We begin with the raw amino-acid sequence, 193 residues long: MRIAILGGTYNPVHIGHIFLAKEIEYLLNIDKIIFIPTCNPTHKLIGEGVSVKNRIDMLKLALKNENKMFIDDCDIINGGITYTIDTISCVKKKYKNDKLFLVIGDDLFQNFDSWKDPQSIASSVDLVVAHRIYKERLKSSFKHIYIDNKIIPISSSEIRNRIANGFPVSYLLPFGVLKYIKDNNLYVKKVNV.

Belongs to the NadD family.

The catalysed reaction is nicotinate beta-D-ribonucleotide + ATP + H(+) = deamido-NAD(+) + diphosphate. The protein operates within cofactor biosynthesis; NAD(+) biosynthesis; deamido-NAD(+) from nicotinate D-ribonucleotide: step 1/1. Catalyzes the reversible adenylation of nicotinate mononucleotide (NaMN) to nicotinic acid adenine dinucleotide (NaAD). This chain is Probable nicotinate-nucleotide adenylyltransferase, found in Borreliella afzelii (strain PKo) (Borrelia afzelii).